Reading from the N-terminus, the 522-residue chain is Maturase K (522 aa).

The protein belongs to the intron maturase 2 family. MatK subfamily.

The protein localises to the plastid. It is found in the chloroplast. Functionally, usually encoded in the trnK tRNA gene intron. Probably assists in splicing its own and other chloroplast group II introns. This is Maturase K from Schizorhiza neglecta (Lapeirousia neglecta).